The primary structure comprises 300 residues: tRNA pseudouridine synthase B (300 aa).

The Nucleophile role is filled by D47.

It belongs to the pseudouridine synthase TruB family. Type 1 subfamily.

It carries out the reaction uridine(55) in tRNA = pseudouridine(55) in tRNA. Its function is as follows. Responsible for synthesis of pseudouridine from uracil-55 in the psi GC loop of transfer RNAs. The protein is tRNA pseudouridine synthase B of Azoarcus sp. (strain BH72).